The following is a 137-amino-acid chain: Chaperone protein YscB (137 aa).

In terms of assembly, interacts with SycN to form a complex which specifically binds to YopN.

The protein localises to the cytoplasm. It localises to the cell inner membrane. In terms of biological role, functions as a specific chaperone for YopN. It could facilitate the secretion and the subsequent translocation of YopN. The protein is Chaperone protein YscB (yscB) of Yersinia pestis.